Consider the following 426-residue polypeptide: tRNA modification GTPase MnmE (426 aa).

3 residues coordinate (6S)-5-formyl-5,6,7,8-tetrahydrofolate: R20, E77, and M117. The region spanning 213-350 (GFEVAILGAP…LLTDIEGVLS (138 aa)) is the TrmE-type G domain. A K(+)-binding site is contributed by N223. GTP-binding positions include 223–228 (NAGKST), 242–248 (SDVPGTT), and 267–270 (DTAG). Position 227 (S227) interacts with Mg(2+). K(+) contacts are provided by S242, V244, and T247. T248 lines the Mg(2+) pocket. K426 is a (6S)-5-formyl-5,6,7,8-tetrahydrofolate binding site.

Belongs to the TRAFAC class TrmE-Era-EngA-EngB-Septin-like GTPase superfamily. TrmE GTPase family. In terms of assembly, homodimer. Heterotetramer of two MnmE and two MnmG subunits. K(+) is required as a cofactor.

It localises to the cytoplasm. Exhibits a very high intrinsic GTPase hydrolysis rate. Involved in the addition of a carboxymethylaminomethyl (cmnm) group at the wobble position (U34) of certain tRNAs, forming tRNA-cmnm(5)s(2)U34. The protein is tRNA modification GTPase MnmE of Jannaschia sp. (strain CCS1).